Here is a 348-residue protein sequence, read N- to C-terminus: Peptide-N(4)-(N-acetyl-beta-glucosaminyl)asparagine amidase (348 aa).

The Zn(2+) site is built by Cys116, Cys119, Cys151, and Cys154. Cys177 functions as the Nucleophile in the catalytic mechanism. Active-site residues include His204 and Asp221. Glu224 contacts substrate. The segment at Pro311–Lys348 is disordered. The span at Glu338–Lys348 shows a compositional bias: basic and acidic residues.

Belongs to the transglutaminase-like superfamily. PNGase family. Requires Zn(2+) as cofactor.

It is found in the cytoplasm. It carries out the reaction Hydrolysis of an N(4)-(acetyl-beta-D-glucosaminyl)asparagine residue in which the glucosamine residue may be further glycosylated, to yield a (substituted) N-acetyl-beta-D-glucosaminylamine and a peptide containing an aspartate residue.. In terms of biological role, specifically deglycosylates the denatured form of N-linked glycoproteins in the cytoplasm and assists their proteasome-mediated degradation. Cleaves the beta-aspartyl-glucosamine (GlcNAc) of the glycan and the amide side chain of Asn, converting Asn to Asp. Prefers proteins containing high-mannose over those bearing complex type oligosaccharides. Can recognize misfolded proteins in the endoplasmic reticulum that are exported to the cytosol to be destroyed and deglycosylate them, while it has no activity toward native proteins. Deglycosylation is a prerequisite for subsequent proteasome-mediated degradation of some, but not all, misfolded glycoproteins. This is Peptide-N(4)-(N-acetyl-beta-glucosaminyl)asparagine amidase (PNG1) from Candida glabrata (strain ATCC 2001 / BCRC 20586 / JCM 3761 / NBRC 0622 / NRRL Y-65 / CBS 138) (Yeast).